We begin with the raw amino-acid sequence, 475 residues long: Sensor histidine kinase GlrK (475 aa).

The Cytoplasmic segment spans residues 1–13 (MKRWPVFPRSLRQ). Residues 14–34 (LVMLAFLLILLPLLVLAWQAW) form a helical membrane-spanning segment. Residues 35–173 (QSLNALSDQA…LQREIAERGQ (139 aa)) are Periplasmic-facing. A helical transmembrane segment spans residues 174–194 (YFGWQSLVLFLVSLVMVLLFT). The Cytoplasmic portion of the chain corresponds to 195–475 (RMIIGPVKNI…IELPSSKNTK (281 aa)). The Histidine kinase domain maps to 256–472 (HLSHELKTPL…CFRIELPSSK (217 aa)). At His-259 the chain carries Phosphohistidine; by autocatalysis.

In terms of processing, autophosphorylated.

It localises to the cell inner membrane. It carries out the reaction ATP + protein L-histidine = ADP + protein N-phospho-L-histidine.. In terms of biological role, member of the two-component regulatory system GlrR/GlrK that up-regulates transcription of the glmY sRNA when cells enter the stationary growth phase. Activates GlrR by phosphorylation. The protein is Sensor histidine kinase GlrK (glrK) of Escherichia coli (strain K12).